The sequence spans 513 residues: Autophagy-related protein 18 (513 aa).

The stretch at 2–40 (SDLPIINFINFNQNGTCISIGTSQGFKIFNCEPFGRFYQ) is one WD 1 repeat. The tract at residues 167–225 (NNINIKKSDAAEDPLRKDHFAYDPSDHSHPQSTTESTSNNHNRTYSSGNNNNTNSNPNK) is disordered. The span at 172-195 (KKSDAAEDPLRKDHFAYDPSDHSH) shows a compositional bias: basic and acidic residues. Over residues 205–225 (NNHNRTYSSGNNNNTNSNPNK) the composition is skewed to low complexity. The stretch at 248-288 (AHKGEIAALKLSADGTLLATASEKGTIIRVFNVENGSKVYQ) is one WD 2 repeat. The interval 289–292 (FRRG) is necessary for proper localization to vacuole membrane. The L/FRRG motif motif lies at 289 to 293 (FRRGT). One copy of the WD 3 repeat lies at 293–332 (TYSTKISSLSFSKDNQFLAVCSSSKTVHIFKLGEKIIDNT). The interval 333–398 (KPNELNSDDD…TVGRMIRKSS (66 aa)) is disordered. Residues 338–369 (NSDDDMDDDLLPQFENGDDEEEVDEETLDEEA) show a composition bias toward acidic residues.

The protein belongs to the WD repeat PROPPIN family. As to quaternary structure, component of the PI(3,5)P2 regulatory complex. Interacts with ATG2 and ATG9. The ATG2-ATG18 complex is essential for autophagosome formation.

The protein resides in the preautophagosomal structure membrane. Its subcellular location is the vacuole membrane. It is found in the endosome membrane. Functionally, component of the PI(3,5)P2 regulatory complex that regulates both the synthesis and turnover of phosphatidylinositol 3,5-bisphosphate (PtdIns(3,5)P2). Plays an important role in osmotically-induced vacuole fragmentation. Required for cytoplasm to vacuole transport (Cvt) vesicle formation, pexophagy and starvation-induced autophagy. Involved in correct ATG9 trafficking to the pre-autophagosomal structure. With ATG2, protects ATG8 from ATG4-mediated cleavage. The chain is Autophagy-related protein 18 from Kluyveromyces marxianus (strain DMKU3-1042 / BCC 29191 / NBRC 104275) (Yeast).